Consider the following 88-residue polypeptide: MSVFILFYLWIVPIVIGILCSVAAHKSKGKMRVAPGIAMIVLSIISLITAFTAGHTNFHVFIGGMFLFGTFLVGSAFPFFFGLKKKEK.

3 consecutive transmembrane segments (helical) span residues 3–23, 33–53, and 61–81; these read VFILFYLWIVPIVIGILCSVA, VAPGIAMIVLSIISLITAFTA, and FIGGMFLFGTFLVGSAFPFFF.

Its subcellular location is the cell membrane. This is an uncharacterized protein from Bacillus subtilis (strain 168).